The chain runs to 235 residues: Aspartate/glutamate leucyltransferase (235 aa).

It belongs to the R-transferase family. Bpt subfamily.

The protein localises to the cytoplasm. It carries out the reaction N-terminal L-glutamyl-[protein] + L-leucyl-tRNA(Leu) = N-terminal L-leucyl-L-glutamyl-[protein] + tRNA(Leu) + H(+). It catalyses the reaction N-terminal L-aspartyl-[protein] + L-leucyl-tRNA(Leu) = N-terminal L-leucyl-L-aspartyl-[protein] + tRNA(Leu) + H(+). In terms of biological role, functions in the N-end rule pathway of protein degradation where it conjugates Leu from its aminoacyl-tRNA to the N-termini of proteins containing an N-terminal aspartate or glutamate. The polypeptide is Aspartate/glutamate leucyltransferase (Pseudomonas putida (strain W619)).